Consider the following 194-residue polypeptide: Inner membrane-spanning protein YciB (194 aa).

A run of 5 helical transmembrane segments spans residues 1-21, 49-69, 77-97, 120-140, and 150-170; these read MKLLFDFFPIILFFVVYKTTN, EKMHLFALVIVVILGGATILF, WKPSVVCWLLAVVFLIGGWVS, LNYSWVIFNTLLGALNLYVAY, and FKLFGMLGLSLVFALMQGVYI.

The protein belongs to the YciB family.

It is found in the cell inner membrane. Functionally, plays a role in cell envelope biogenesis, maintenance of cell envelope integrity and membrane homeostasis. This chain is Inner membrane-spanning protein YciB, found in Hahella chejuensis (strain KCTC 2396).